Consider the following 358-residue polypeptide: Mannonate dehydratase (358 aa).

Belongs to the mannonate dehydratase family. Fe(2+) is required as a cofactor. Mn(2+) serves as cofactor.

The enzyme catalyses D-mannonate = 2-dehydro-3-deoxy-D-gluconate + H2O. The protein operates within carbohydrate metabolism; pentose and glucuronate interconversion. Functionally, catalyzes the dehydration of D-mannonate. The chain is Mannonate dehydratase from Lactococcus lactis subsp. lactis (strain IL1403) (Streptococcus lactis).